A 361-amino-acid polypeptide reads, in one-letter code: Trans-2,3-enoyl-CoA reductase-like (361 aa).

Residues S33 and S35 each carry the phosphoserine modification. A run of 4 helical transmembrane segments spans residues 139 to 159 (VGWT…YLLF), 181 to 201 (VHLA…ETLF), 215 to 235 (LIKG…YINH), and 309 to 329 (ISFT…LMTI).

Belongs to the steroid 5-alpha reductase family. Expression is highest in the heart with very low to almost undetectable levels in brain, skeletal muscle, stomach, pancreas, liver, kidney, small intestine, and uterus.

The protein localises to the membrane. The protein resides in the endoplasmic reticulum. In Mus musculus (Mouse), this protein is Trans-2,3-enoyl-CoA reductase-like (Tecrl).